The sequence spans 182 residues: Phospholipase A2 inhibitor gamma subunit A (182 aa).

Disulfide bonds link C3/C27, C6/C13, C20/C48, C54/C75, C76/C81, C99/C124, C117/C146, and C150/C172. N157 carries an N-linked (GlcNAc...) asparagine glycan.

Belongs to the CNF-like-inhibitor family. Heterotrimer of 2 subunits A and 1 subunit B. In terms of processing, N-glycosylation is not important for activity, since deglycosylation does not change its PLA2 inhibitory activity. Expressed by the liver.

Its subcellular location is the secreted. In terms of biological role, strongly inhibits its own venom PLA2 and all other PLA2s tested including Elapid, Crotalid and Viperid venom PLA2s, as well as honeybee PLA2s. This is Phospholipase A2 inhibitor gamma subunit A from Laticauda semifasciata (Black-banded sea krait).